Consider the following 394-residue polypeptide: Na(+)/H(+) antiporter NhaA (394 aa).

11 helical membrane-spanning segments follow: residues 24–44 (AGLV…SPLA), 58–78 (LSVQ…LVGL), 96–116 (TLPG…YVML), 126–146 (GWAI…SLLG), 155–175 (IFLA…IAIF), 180–200 (INVA…SLCA), 214–234 (AVLW…GVLL), 267–287 (VAFA…FASI), 300–320 (VAAG…ALMV), 336–356 (VLGV…IGLL), and 370–390 (GILA…RIAG).

It belongs to the NhaA Na(+)/H(+) (TC 2.A.33) antiporter family.

Its subcellular location is the cell inner membrane. The enzyme catalyses Na(+)(in) + 2 H(+)(out) = Na(+)(out) + 2 H(+)(in). Its function is as follows. Na(+)/H(+) antiporter that extrudes sodium in exchange for external protons. The chain is Na(+)/H(+) antiporter NhaA from Azorhizobium caulinodans (strain ATCC 43989 / DSM 5975 / JCM 20966 / LMG 6465 / NBRC 14845 / NCIMB 13405 / ORS 571).